We begin with the raw amino-acid sequence, 1515 residues long: DNA topoisomerase 2-binding protein 1 (1515 aa).

BRCT domains are found at residues 101–189 and 195–284; these read VYNM…KYTD and FKCP…IYKA. Threonine 298 is subject to Phosphothreonine. 3 BRCT domains span residues 353–443, 551–636, and 644–741; these read APED…SYIH, REEG…SNPL, and SGVT…HFLV. The tract at residues 759–893 is interaction with CIP2A; the sequence is VSSNPDLPAH…TDSHSASPQL (135 aa). Threonine 782 carries the phosphothreonine modification. The tract at residues 799–826 is disordered; it reads SQQRGQDPTFPPVRQPLTKEPSLHLDTP. Residue threonine 851 is modified to Phosphothreonine. A phosphoserine mark is found at serine 862, serine 863, serine 866, serine 888, and serine 890. Residues 880-891 are compositionally biased toward polar residues; that stretch reads SSRNTDSHSASP. A disordered region spans residues 880–901; it reads SSRNTDSHSASPQLKGAHLEEE. The 92-residue stretch at 902–993 folds into the BRCT 6 domain; that stretch reads ETRKPLDSVV…KHLPESLYPH (92 aa). The tract at residues 1020 to 1055 is disordered; sequence VSASKDDGPDHLSVEGNETNTMGTNDKESPLLNGSG. The span at 1023 to 1032 shows a compositional bias: basic and acidic residues; sequence SKDDGPDHLS. The residue at position 1064 (threonine 1064) is a Phosphothreonine. Over residues 1097–1116 the composition is skewed to low complexity; sequence SRSSCNSASSTPDSARSVRS. Disordered regions lie at residues 1097 to 1119, 1203 to 1255, and 1491 to 1515; these read SRSSCNSASSTPDSARSVRSGRS, VTQA…TQEE, and KKGGPGLPQKRKTPAENVVKRPRVH. A compositionally biased stretch (pro residues) spans 1217-1229; that stretch reads PPVAERPLIPEPQ. A BRCT 7 domain is found at 1255-1347; it reads ETHRKVKKQY…RFVQEEDYEW (93 aa). The Nuclear localization signal motif lies at 1510–1513; it reads KRPR.

This sequence belongs to the TOPBP1 family. Interacts (via BRCT domains 1 and 2) with (phosphorylated) MDC1; promoting TOPBP1 recruitment to DNA damage sites during mitosis. Interacts (via BRCT domains 7 and 8) with (autophosphorylated) ATR; promoting activation of ATR. Interacts (via BRCT domains 7 and 8) with (phosphorylated) POLQ; specifically binds POLQ phosphorylated by PLK1, promoting POLQ recruitment to DNA damage sites. Interacts (via BRCT domains 1 and 2) with (phosphorylated) RAD9A. Interacts (via BRCT domain 2) with (phosphorylated) TP53BP1. Interacts (via BRCT domain 2) with (phosphorylated) HTATSF1. Interacts (via BRCT domains 7 and 8) with (phosphorylated) RAD51; promoting RAD51 recruitment to damaged chromatin. Interacts with CIP2A; forming the CIP2A-TOPBP1 complex. Interacts with POLE. Interacts with UBR5. Interacts with E2F1. Interacts with PML. Interacts with SMARCA2. Interacts with SMARCA4. Interacts with RHNO1. May interact with TOP2B. Interacts with TICRR. Interacts with HELB. Post-translationally, phosphorylated on serine and threonine residues in response to X-ray irradiation. Ubiquitinated and degraded by the proteasome. X-ray irradiation reduces ubiquitination. Deubiquitinated by USP13; leading to TOPBP1 stabilizion and activation of the ATR-TOPBP1 axis pathway. In terms of tissue distribution, highly expressed in testis.

The protein localises to the nucleus. It is found in the chromosome. The protein resides in the cytoplasm. It localises to the cytoskeleton. Its subcellular location is the microtubule organizing center. The protein localises to the centrosome. It is found in the spindle pole. Functionally, scaffold protein that acts as a key protein-protein adapter in DNA replication and DNA repair. Composed of multiple BRCT domains, which specifically recognize and bind phosphorylated proteins, bringing proteins together into functional combinations. Required for DNA replication initiation but not for the formation of pre-replicative complexes or the elongation stages. Necessary for the loading of replication factors onto chromatin, including GMNC, CDC45, DNA polymerases and components of the GINS complex. Plays a central role in DNA repair by bridging proteins and promoting recruitment of proteins to DNA damage sites. Involved in double-strand break (DSB) repair via homologous recombination in S-phase by promoting the exchange between the DNA replication factor A (RPA) complex and RAD51. Mechanistically, TOPBP1 is recruited to DNA damage sites in S-phase via interaction with phosphorylated HTATSF1, and promotes the loading of RAD51, thereby facilitating RAD51 nucleofilaments formation and RPA displacement, followed by homologous recombination. Involved in microhomology-mediated end-joining (MMEJ) DNA repair by promoting recruitment of polymerase theta (POLQ) to DNA damage sites during mitosis. MMEJ is an alternative non-homologous end-joining (NHEJ) machinery that takes place during mitosis to repair DSBs in DNA that originate in S-phase. Recognizes and binds POLQ phosphorylated by PLK1, enabling its recruitment to DSBs for subsequent repair. Involved in G1 DNA damage checkpoint by acting as a molecular adapter that couples TP53BP1 and the 9-1-1 complex. In response to DNA damage, triggers the recruitment of checkpoint signaling proteins on chromatin, which activate the CHEK1 signaling pathway and block S-phase progression. Acts as an activator of the kinase activity of ATR. Also required for chromosomal stability when DSBs occur during mitosis by forming filamentous assemblies that bridge MDC1 and tether broken chromosomes during mitosis. Together with CIP2A, plays an essential role in the response to genome instability generated by the presence of acentric chromosome fragments derived from shattered chromosomes within micronuclei. Micronuclei, which are frequently found in cancer cells, consist of chromatin surrounded by their own nuclear membrane: following breakdown of the micronuclear envelope, a process associated with chromothripsis, the CIP2A-TOPBP1 complex tethers chromosome fragments during mitosis to ensure clustered segregation of the fragments to a single daughter cell nucleus, facilitating re-ligation with limited chromosome scattering and loss. Recruits the SWI/SNF chromatin remodeling complex to E2F1-responsive promoters, thereby down-regulating E2F1 activity and inhibiting E2F1-dependent apoptosis during G1/S transition and after DNA damage. The polypeptide is DNA topoisomerase 2-binding protein 1 (Mus musculus (Mouse)).